Here is a 312-residue protein sequence, read N- to C-terminus: Acetyl-coenzyme A carboxylase carboxyl transferase subunit alpha (312 aa).

The CoA carboxyltransferase C-terminal domain maps to N36–E286.

It belongs to the AccA family. As to quaternary structure, acetyl-CoA carboxylase is a heterohexamer composed of biotin carboxyl carrier protein (AccB), biotin carboxylase (AccC) and two subunits each of ACCase subunit alpha (AccA) and ACCase subunit beta (AccD).

The protein resides in the cytoplasm. It catalyses the reaction N(6)-carboxybiotinyl-L-lysyl-[protein] + acetyl-CoA = N(6)-biotinyl-L-lysyl-[protein] + malonyl-CoA. The protein operates within lipid metabolism; malonyl-CoA biosynthesis; malonyl-CoA from acetyl-CoA: step 1/1. Component of the acetyl coenzyme A carboxylase (ACC) complex. First, biotin carboxylase catalyzes the carboxylation of biotin on its carrier protein (BCCP) and then the CO(2) group is transferred by the carboxyltransferase to acetyl-CoA to form malonyl-CoA. The polypeptide is Acetyl-coenzyme A carboxylase carboxyl transferase subunit alpha (Campylobacter jejuni subsp. doylei (strain ATCC BAA-1458 / RM4099 / 269.97)).